Here is a 59-residue protein sequence, read N- to C-terminus: uncharacterized protein (59 aa).

Residue 33 to 40 (GRRRVGKT) participates in ATP binding.

This is an uncharacterized protein from Methanocaldococcus jannaschii (strain ATCC 43067 / DSM 2661 / JAL-1 / JCM 10045 / NBRC 100440) (Methanococcus jannaschii).